The chain runs to 167 residues: uncharacterized protein (167 aa).

The span at 1–13 (MQGDIRRKKDLLP) shows a compositional bias: basic and acidic residues. Disordered stretches follow at residues 1–26 (MQGD…SRRR) and 67–167 (ESHS…ILDN). Over residues 71 to 80 (SDVSASASDH) the composition is skewed to low complexity. Over residues 102 to 156 (VPKEKFNNEVAKQQEVKNLENDLKPQIDSEKQKQINKDKKEQKQQLQKEKQDLAK) the composition is skewed to basic and acidic residues.

This is an uncharacterized protein from Saccharomyces cerevisiae (strain ATCC 204508 / S288c) (Baker's yeast).